We begin with the raw amino-acid sequence, 430 residues long: Lipoyl synthase, mitochondrial (430 aa).

Residues 1 to 37 (MATSAGKLRTLYSAHSSLSSLPPSARPTLQLATLRSY) constitute a mitochondrion transit peptide. A compositionally biased stretch (polar residues) spans 39 to 55 (TTTPHDSPIGNTSNTPP). The tract at residues 39–58 (TTTPHDSPIGNTSNTPPTVK) is disordered. The [4Fe-4S] cluster site is built by Cys-141, Cys-146, Cys-152, Cys-172, Cys-176, Cys-179, and Ser-387. A Radical SAM core domain is found at 155–376 (GSSKSAATAT…KERALEMGFL (222 aa)).

The protein belongs to the radical SAM superfamily. Lipoyl synthase family. The cofactor is [4Fe-4S] cluster.

Its subcellular location is the mitochondrion. It catalyses the reaction [[Fe-S] cluster scaffold protein carrying a second [4Fe-4S](2+) cluster] + N(6)-octanoyl-L-lysyl-[protein] + 2 oxidized [2Fe-2S]-[ferredoxin] + 2 S-adenosyl-L-methionine + 4 H(+) = [[Fe-S] cluster scaffold protein] + N(6)-[(R)-dihydrolipoyl]-L-lysyl-[protein] + 4 Fe(3+) + 2 hydrogen sulfide + 2 5'-deoxyadenosine + 2 L-methionine + 2 reduced [2Fe-2S]-[ferredoxin]. It participates in protein modification; protein lipoylation via endogenous pathway; protein N(6)-(lipoyl)lysine from octanoyl-[acyl-carrier-protein]: step 2/2. Catalyzes the radical-mediated insertion of two sulfur atoms into the C-6 and C-8 positions of the octanoyl moiety bound to the lipoyl domains of lipoate-dependent enzymes, thereby converting the octanoylated domains into lipoylated derivatives. This chain is Lipoyl synthase, mitochondrial, found in Ajellomyces capsulatus (strain G186AR / H82 / ATCC MYA-2454 / RMSCC 2432) (Darling's disease fungus).